Reading from the N-terminus, the 157-residue chain is Large ribosomal subunit protein eL24 (157 aa).

The tract at residues Asn95–Arg157 is disordered. Residues Gln96–Lys117 show a composition bias toward basic and acidic residues. The span at Lys123 to Pro145 shows a compositional bias: low complexity.

The protein belongs to the eukaryotic ribosomal protein eL24 family. As to quaternary structure, component of the large ribosomal subunit.

It localises to the cytoplasm. Functionally, component of the large ribosomal subunit. The ribosome is a large ribonucleoprotein complex responsible for the synthesis of proteins in the cell. Plays an essential role in early embryonic development. The protein is Large ribosomal subunit protein eL24 (rpl24) of Danio rerio (Zebrafish).